Here is a 596-residue protein sequence, read N- to C-terminus: UvrABC system protein C (596 aa).

Residues 14–91 form the GIY-YIG domain; that stretch reads QQPGCYLMKD…IKKYDPRYNV (78 aa). A UVR domain is found at 196–231; it reads KDIRKNLAGEMQKASEALNFERAKEIRDTIQHIDAT.

Belongs to the UvrC family. As to quaternary structure, interacts with UvrB in an incision complex.

Its subcellular location is the cytoplasm. Its function is as follows. The UvrABC repair system catalyzes the recognition and processing of DNA lesions. UvrC both incises the 5' and 3' sides of the lesion. The N-terminal half is responsible for the 3' incision and the C-terminal half is responsible for the 5' incision. The polypeptide is UvrABC system protein C (Oceanobacillus iheyensis (strain DSM 14371 / CIP 107618 / JCM 11309 / KCTC 3954 / HTE831)).